A 425-amino-acid polypeptide reads, in one-letter code: CDP-diacylglycerol--serine O-phosphatidyltransferase 1 (425 aa).

Basic and acidic residues predominate over residues 1-16 (MEPNGYRKERRKEQHL). The segment at 1 to 23 (MEPNGYRKERRKEQHLGRMNGGG) is disordered. The next 9 membrane-spanning stretches (helical) occupy residues 42 to 62 (TISL…ALDP), 79 to 99 (WAMI…TVLI), 105 to 125 (IWRL…FLLF), 197 to 217 (PLLW…RHML), 227 to 247 (SIVL…MYTV), 296 to 316 (FIQV…TFFL), 321 to 341 (WIPP…LIAI), 361 to 381 (GAFC…CIKF), and 390 to 410 (MPLW…AFLL).

The protein belongs to the CDP-alcohol phosphatidyltransferase class-I family. As to expression, expressed in trichomes, leaf veins and root vasculature.

Its subcellular location is the endoplasmic reticulum membrane. The protein resides in the nucleus envelope. The catalysed reaction is a CDP-1,2-diacyl-sn-glycerol + L-serine = a 1,2-diacyl-sn-glycero-3-phospho-L-serine + CMP + H(+). It functions in the pathway phospholipid metabolism; phosphatidylethanolamine biosynthesis; phosphatidylethanolamine from CDP-diacylglycerol: step 1/2. Its function is as follows. Catalyzes a base-exchange reaction in which the polar head group of phosphatidylethanolamine (PE) or phosphatidylcholine (PC) is replaced by L-serine. Is essential for phosphatidylserine (PS) biosynthesis and PE seems to be the most plausible substrate. Plays an important role in microspore maturation. The polypeptide is CDP-diacylglycerol--serine O-phosphatidyltransferase 1 (PSS1) (Arabidopsis thaliana (Mouse-ear cress)).